Reading from the N-terminus, the 280-residue chain is 1-cyclohexenylcarbonyl-CoA reductase (280 aa).

NADP(+) contacts are provided by residues 22-25 (SRGI), 71-72 (DV), and Asn98. Residues Tyr158 and Lys165 each act as proton acceptor in the active site. NADP(+) contacts are provided by residues Lys165 and 194–196 (IDS).

This sequence belongs to the short-chain dehydrogenases/reductases (SDR) family. Homodimer.

It catalyses the reaction (4R,5R)-4,5-dihydroxycyclohex-2-ene-1-carbonyl-CoA + NADP(+) = (3R,4R)-3,4-dihydroxycyclohexa-1,5-diene-1-carbonyl-CoA + NADPH + H(+). It carries out the reaction (3S)-3-hydroxycyclohexane-1-carbonyl-CoA + NADP(+) = (5S)-5-hydroxycyclohex-1-ene-1-carbonyl-CoA + NADPH + H(+). The catalysed reaction is cyclohexane-1-carbonyl-CoA + NADP(+) = cyclohex-1-ene-1-carbonyl-CoA + NADPH + H(+). The protein operates within antibiotic biosynthesis. With respect to regulation, inhibited by the thiol inhibitors p-chloromercuribenzoate, N-ethylmaleimide and iodoacetamide. Also inhibited by various divalent cations. Its function is as follows. Involved in the biosynthesis of the antifungal antibiotic ansatrienin A (mycotrienin I). Catalyzes three of the reductive steps involved in the formation of the cyclohexanecarboxylic acid (CHC) moiety of ansatrienin from shikimic acid. Can use 3,4-dihydroxycyclohexa-1,5-diene-1-carbonyl-CoA, 5-hydroxycyclohex-1-ene-1-carbonyl-CoA and cyclohex-1-ene-1-carbonyl-CoA as substrates. This Streptomyces collinus protein is 1-cyclohexenylcarbonyl-CoA reductase.